A 670-amino-acid polypeptide reads, in one-letter code: Methionine--tRNA ligase (670 aa).

Positions 14–24 match the 'HIGH' region motif; sequence PYANGHLHLGH. Positions 145, 148, 158, and 161 each coordinate Zn(2+). Positions 330-334 match the 'KMSKS' region motif; it reads KMSKS. Position 333 (Lys333) interacts with ATP. Residues 570 to 670 form the tRNA-binding domain; that stretch reads DFAKVDLRIA…AGALPGMKVK (101 aa).

This sequence belongs to the class-I aminoacyl-tRNA synthetase family. MetG type 1 subfamily. Homodimer. The cofactor is Zn(2+).

It localises to the cytoplasm. The catalysed reaction is tRNA(Met) + L-methionine + ATP = L-methionyl-tRNA(Met) + AMP + diphosphate. Functionally, is required not only for elongation of protein synthesis but also for the initiation of all mRNA translation through initiator tRNA(fMet) aminoacylation. In Legionella pneumophila (strain Paris), this protein is Methionine--tRNA ligase.